The sequence spans 267 residues: 4-hydroxy-tetrahydrodipicolinate reductase (267 aa).

Residues glycine 8–methionine 13, glutamate 34, glycine 98–threonine 100, and alanine 122–methionine 125 each bind NAD(+). Histidine 155 functions as the Proton donor/acceptor in the catalytic mechanism. Histidine 156 serves as a coordination point for (S)-2,3,4,5-tetrahydrodipicolinate. Residue lysine 159 is the Proton donor of the active site. Residue glycine 165–threonine 166 participates in (S)-2,3,4,5-tetrahydrodipicolinate binding.

It belongs to the DapB family.

The protein resides in the cytoplasm. The enzyme catalyses (S)-2,3,4,5-tetrahydrodipicolinate + NAD(+) + H2O = (2S,4S)-4-hydroxy-2,3,4,5-tetrahydrodipicolinate + NADH + H(+). The catalysed reaction is (S)-2,3,4,5-tetrahydrodipicolinate + NADP(+) + H2O = (2S,4S)-4-hydroxy-2,3,4,5-tetrahydrodipicolinate + NADPH + H(+). The protein operates within amino-acid biosynthesis; L-lysine biosynthesis via DAP pathway; (S)-tetrahydrodipicolinate from L-aspartate: step 4/4. Catalyzes the conversion of 4-hydroxy-tetrahydrodipicolinate (HTPA) to tetrahydrodipicolinate. The sequence is that of 4-hydroxy-tetrahydrodipicolinate reductase from Syntrophotalea carbinolica (strain DSM 2380 / NBRC 103641 / GraBd1) (Pelobacter carbinolicus).